A 417-amino-acid chain; its full sequence is Serine hydroxymethyltransferase 2 (417 aa).

(6S)-5,6,7,8-tetrahydrofolate is bound by residues Leu121 and 125-127; that span reads GHL. Lys230 is modified (N6-(pyridoxal phosphate)lysine). 355-357 contacts (6S)-5,6,7,8-tetrahydrofolate; sequence SPF.

It belongs to the SHMT family. As to quaternary structure, homodimer. The cofactor is pyridoxal 5'-phosphate.

It localises to the cytoplasm. It carries out the reaction (6R)-5,10-methylene-5,6,7,8-tetrahydrofolate + glycine + H2O = (6S)-5,6,7,8-tetrahydrofolate + L-serine. The protein operates within one-carbon metabolism; tetrahydrofolate interconversion. It functions in the pathway amino-acid biosynthesis; glycine biosynthesis; glycine from L-serine: step 1/1. In terms of biological role, catalyzes the reversible interconversion of serine and glycine with tetrahydrofolate (THF) serving as the one-carbon carrier. This reaction serves as the major source of one-carbon groups required for the biosynthesis of purines, thymidylate, methionine, and other important biomolecules. Also exhibits THF-independent aldolase activity toward beta-hydroxyamino acids, producing glycine and aldehydes, via a retro-aldol mechanism. The polypeptide is Serine hydroxymethyltransferase 2 (Pseudomonas syringae pv. syringae (strain B728a)).